The chain runs to 61 residues: Bowman-Birk type proteinase inhibitor B5 (61 aa).

6 cysteine pairs are disulfide-bonded: C5/C60, C6/C22, C9/C56, C12/C20, C29/C36, and C33/C48.

The protein belongs to the Bowman-Birk serine protease inhibitor family. As to expression, expressed in bulb (at protein level).

In terms of biological role, serine protease inhibitor. Inhibits trypsin (Ki = 41 nM) and weakly inhibits chymotrypsin (Ki = 410 nM). Does not inhibit bacterial subtilisin. The chain is Bowman-Birk type proteinase inhibitor B5 from Hyacinthus orientalis (Common hyacinth).